The primary structure comprises 168 residues: DOMON domain-containing protein Y73F4A.2 (168 aa).

An N-terminal signal peptide occupies residues 1-18 (MFRSIAVLSALLFAFASA). Residues 26-143 (SDFEVYWRFA…CQKWRFVKSG (118 aa)) form the DOMON domain. The N-linked (GlcNAc...) asparagine glycan is linked to Asn-36. A disordered region spans residues 148 to 168 (GQLTRNDKSPKEKKVCPMECN). The span at 152-168 (RNDKSPKEKKVCPMECN) shows a compositional bias: basic and acidic residues.

It is found in the secreted. This is DOMON domain-containing protein Y73F4A.2 from Caenorhabditis elegans.